The sequence spans 919 residues: Lipoxygenase 3, chloroplastic (919 aa).

Residues 1–52 (MALAKELMGYPLITERSSLVSSASHFKKRTQSTQFSINPFDRRPRKTKSGVV) constitute a chloroplast transit peptide. One can recognise a PLAT domain in the interval 86 to 222 (VRAVVTVRNK…DHPDKRIFFT (137 aa)). In terms of domain architecture, Lipoxygenase spans 225 to 919 (PYLPNETPSG…CRGVPNSVSI (695 aa)). Residues 272-310 (PDKSSELSRPKLGGKEVPYPRRCRTGRQSTVSDKDAESR) form a disordered region. 5 residues coordinate Fe cation: histidine 578, histidine 583, histidine 770, asparagine 774, and isoleucine 919.

This sequence belongs to the lipoxygenase family. It depends on Fe cation as a cofactor. Expressed in roots and leaves.

The protein localises to the plastid. It is found in the chloroplast. The enzyme catalyses (9Z,12Z)-octadecadienoate + O2 = (13S)-hydroperoxy-(9Z,11E)-octadecadienoate. The catalysed reaction is (9Z,12Z,15Z)-octadecatrienoate + O2 = (13S)-hydroperoxy-(9Z,11E,15Z)-octadecatrienoate. The protein operates within lipid metabolism; oxylipin biosynthesis. Functionally, 13S-lipoxygenase that can use linolenic acid as substrates. Plant lipoxygenases may be involved in a number of diverse aspects of plant physiology including growth and development, pest resistance, and senescence or responses to wounding. Catalyzes the hydroperoxidation of lipids containing a cis,cis-1,4-pentadiene structure. The protein is Lipoxygenase 3, chloroplastic (LOX3) of Arabidopsis thaliana (Mouse-ear cress).